Reading from the N-terminus, the 2280-residue chain is Genome polyprotein (2280 aa).

The SF3 helicase domain maps to 454 to 608 (ETQANNIRST…EEWKKRNPGK (155 aa)). An ATP-binding site is contributed by 480 to 487 (GAPGIGKT). Y965 is modified (O-(5'-phospho-RNA)-tyrosine). Residues 1054-1202 (APTAIVEFTQ…TKVAQRVVKE (149 aa)) enclose the Peptidase C24 domain. Catalysis depends on for 3CLpro activity residues H1084, E1105, and C1169. In terms of domain architecture, RdRp catalytic spans 1442-1567 (GVLYCLDYSK…SVCPATASIF (126 aa)). Residues 1722–1746 (GNGSNPEPKQSNNPMVVDPPGTTGP) are disordered. The segment covering 1723-1735 (NGSNPEPKQSNNP) has biased composition (polar residues).

In terms of assembly, homodimer. Homomultimer. Specific enzymatic cleavages in vivo yield mature proteins. Pro-Pol is first autocatalytically cleaved, then processes the whole polyprotein. In terms of processing, VPg is uridylylated by the polymerase and is covalently attached to the 5'-end of the polyadenylated genomic and subgenomic RNAs. This uridylylated form acts as a nucleotide-peptide primer for the polymerase.

Its subcellular location is the virion. The protein localises to the host cytoplasm. It catalyses the reaction a ribonucleoside 5'-triphosphate + H2O = a ribonucleoside 5'-diphosphate + phosphate + H(+). It carries out the reaction RNA(n) + a ribonucleoside 5'-triphosphate = RNA(n+1) + diphosphate. The catalysed reaction is Endopeptidase with a preference for cleavage when the P1 position is occupied by Glu-|-Xaa and the P1' position is occupied by Gly-|-Yaa.. Its function is as follows. Together with NTPase and NS4, initiates the formation of the replication complex. Induces the proliferation of the host smooth ER membranes forming long tubular structures. These remodeled membranes probably form the viral factories that contain the replication complex. In terms of biological role, displays NTPase activity, but no helicase activity. Induces the formation of convoluted membranes derived from the host ER. These remodeled membranes probably form the viral factories that contain the replication complex. Together with NS2 and NS4, initiates the formation of the replication complex. Functionally, probable key protein responsible for the formation of membrane alterations by the virus. Induces the formation of convoluted membranes derived from the host ER. These remodeled membranes probably form the viral factories that contain the replication complex. Together with NS2 and NTPase, initiates the formation of the replication complex. Viral genome-linked protein is covalently linked to the 5'-end of the positive-strand, negative-strand genomic RNAs and subgenomic RNA. Acts as a genome-linked replication primer. May recruit ribosome to viral RNA thereby promoting viral proteins translation. Interacts with host translation initiation complex to allow the translation of viral proteins. Its function is as follows. Protease-polymerase p76 processes the polyprotein: Pro-Pol is first released by autocleavage, then all other proteins are cleaved. Cleaves host translation initiation factor eIF4G1, eIF4G2 and PABP1 thereby inducing a shutdown of host protein synthesis. This shutdown may not prevent viral mRNA from being translated since viral Vpg replaces the cap. It is also an RNA-directed RNA polymerase which replicates genomic and antigenomic viral RNA by recognizing specific signals. Also transcribes a subgenomic mRNA by initiating RNA synthesis internally on antigenomic RNA. This sgRNA codes for structural proteins. Catalyzes the covalent attachment VPg with viral RNAs. In terms of biological role, capsid protein self assembles to form an icosahedral capsid with a T=3 symmetry, about 38 nm in diameter, and consisting of 180 capsid proteins. The capsid encapsulate the genomic RNA and VP2 proteins. Attaches virion to target cells, inducing endocytosis of the viral particle. Acidification of the endosome induces conformational change of capsid protein thereby injecting virus genomic RNA into host cytoplasm. This Sapporo virus (isolate GI/Human/Germany/pJG-Sap01) (Hu/Dresden/pJG-Sap01/DE) protein is Genome polyprotein.